The primary structure comprises 64 residues: Large ribosomal subunit protein eL37 (64 aa).

Residues 1–6 form a C4-type zinc finger; it reads GRCSAC. Zn(2+) contacts are provided by cysteine 3 and cysteine 6.

It belongs to the eukaryotic ribosomal protein eL37 family. Zn(2+) is required as a cofactor.

In terms of biological role, binds to the 23S rRNA. The polypeptide is Large ribosomal subunit protein eL37 (RPL37) (Solanum lycopersicum (Tomato)).